The following is a 109-amino-acid chain: Tyrosine-protein phosphatase 6 (109 aa).

Residues 1–109 (YNINVIVMVC…SEDETTPLCV (109 aa)) enclose the Tyrosine-protein phosphatase domain. Asp76 contacts substrate.

It belongs to the protein-tyrosine phosphatase family.

It catalyses the reaction O-phospho-L-tyrosyl-[protein] + H2O = L-tyrosyl-[protein] + phosphate. The protein is Tyrosine-protein phosphatase 6 (STY-6) of Styela plicata (Wrinkled sea squirt).